The primary structure comprises 60 residues: Short neurotoxin 1 (60 aa).

Cystine bridges form between Cys3–Cys22, Cys17–Cys39, Cys41–Cys52, and Cys53–Cys58.

It belongs to the three-finger toxin family. Short-chain subfamily. Type I alpha-neurotoxin sub-subfamily. Expressed by the venom gland.

The protein localises to the secreted. Binds to muscle nicotinic acetylcholine receptor (nAChR) and inhibit acetylcholine from binding to the receptor, thereby impairing neuromuscular transmission. The sequence is that of Short neurotoxin 1 from Dendroaspis jamesoni kaimosae (Eastern Jameson's mamba).